The following is a 364-amino-acid chain: SH3 and cysteine-rich domain-containing protein 3 (364 aa).

Disordered stretches follow at residues 1 to 89 (MTEK…NDKP) and 189 to 244 (NKER…HKQP). The segment covering 64–78 (YEEEEEEEEEEEEPP) has biased composition (acidic residues). The segment at 89–140 (PHKFKDHFFKKPKFCDVCARMIVLNNKFGLRCKNCKTNIHEHCQSYVEMQRC) adopts a Phorbol-ester/DAG-type zinc-finger fold. A compositionally biased stretch (basic and acidic residues) spans 212–242 (ESARPEEGKPQDGNPEGDKKAEKKTPDDKHK). 2 consecutive SH3 domains span residues 247–306 (QQSH…RVRA) and 307–364 (GERV…LEEI).

In terms of assembly, interacts (via SH3 domains) with the calcium channels CACNA1S and CACNA1C. Component of a calcium channel complex with CACNA1S and CACNB1. Component of a calcium channel complex with CACNA1C and CACNB1.

It is found in the cytoplasm. It localises to the cell membrane. The protein resides in the sarcolemma. The protein localises to the T-tubule. Required for normal excitation-contraction coupling in skeletal muscle and for normal muscle contraction in response to membrane depolarization. Required for normal Ca(2+) release from the sarcplasmic reticulum, which ultimately leads to muscle contraction. Probably functions via its effects on muscle calcium channels. Increases CACNA1S channel activity, in addition to its role in enhancing the expression of CACNA1S at the cell membrane. Has a redundant role in promoting the expression of the calcium channel CACNA1S at the cell membrane. Slows down the inactivation rate of the calcium channel CACNA1C. This is SH3 and cysteine-rich domain-containing protein 3 (STAC3) from Homo sapiens (Human).